A 327-amino-acid polypeptide reads, in one-letter code: DNA-directed RNA polymerase subunit alpha (327 aa).

Positions 1 to 227 (MLIAHRPTLI…ELFGLARELN (227 aa)) are alpha N-terminal domain (alpha-NTD). An alpha C-terminal domain (alpha-CTD) region spans residues 244–327 (SDEDLRIPIE…GSYFDPNYGS (84 aa)).

The protein belongs to the RNA polymerase alpha chain family. Homodimer. The RNAP catalytic core consists of 2 alpha, 1 beta, 1 beta' and 1 omega subunit. When a sigma factor is associated with the core the holoenzyme is formed, which can initiate transcription.

The catalysed reaction is RNA(n) + a ribonucleoside 5'-triphosphate = RNA(n+1) + diphosphate. Its function is as follows. DNA-dependent RNA polymerase catalyzes the transcription of DNA into RNA using the four ribonucleoside triphosphates as substrates. The protein is DNA-directed RNA polymerase subunit alpha of Tropheryma whipplei (strain TW08/27) (Whipple's bacillus).